The sequence spans 520 residues: MSLLSLSWLGLRPVAASPWLLLLVVGASWLLARILAWTYAFYHNGRRLRCFPQPRKQNWFLGHLGLVTPTEEGLRVLTQLVATYPQGFVRWLGPITPIINLCHPDIVRSVINTSDAITDKDIVFYKTLKPWLGDGLLLSVGDKWRHHRRLLTPAFHFNILKPYIKIFSKSANIMHAKWQRLAMEGSTCLDVFEHISLMTLDSLQKCIFSFDSNCQEKPSEYITAIMELSALVVKRNNQFFRYKDFLYFLTPCGRRFHRACRLVHDFTDAVIQERRRTLTSQGVDDFLQAKAKSKTLDFIDVLLLSEDKNGKELSDEDIRAEADTFMFGGHDTTASGLSWVLYNLARHPEYQERCRQEVQELLKDREPKEIEWDDLAQLPFLTMCLKESLRLHPPIPTFARGCTQDVVLPDSRVIPKGNVCNINIFAIHHNPSVWPDPEVYDPFRFDPENAQKRSPMAFIPFSAGPRNCIGQKFAMAEMKVVLALTLLRFRILPDHREPRRTPEIVLRAEDGLWLRVEPLG.

A helical membrane pass occupies residues A15–W37. C468 lines the heme pocket.

This sequence belongs to the cytochrome P450 family. Heme is required as a cofactor. In terms of tissue distribution, expressed in the epithelium of seminal vesicles, in renal cortex, in adult and fetal liver, in epidermis, in corneal epithelium, in sweat glands, hair follicles, epithelial linings of the ampulla of vas deferens and of the stomach and small intestine, as well as in the transitional epithelium of the bladder and ureter (at protein level). In the epidermis, expressed from the basal cell to the granular cell layers. In the corneal epithelium, expressed in all cell layers. Also detected in prostate. Up-regulated in the epidermis of psoriatic lesions.

Its subcellular location is the endoplasmic reticulum membrane. It localises to the microsome membrane. It carries out the reaction an organic molecule + reduced [NADPH--hemoprotein reductase] + O2 = an alcohol + oxidized [NADPH--hemoprotein reductase] + H2O + H(+). The enzyme catalyses (5Z,8Z,11Z,14Z)-eicosatetraenoate + reduced [NADPH--hemoprotein reductase] + O2 = (18R)-hydroxy-(5Z,8Z,11Z,14Z)-eicosatetraenoate + oxidized [NADPH--hemoprotein reductase] + H2O + H(+). It catalyses the reaction (4Z,7Z,10Z,13Z,16Z)-docosapentaenoate + reduced [NADPH--hemoprotein reductase] + O2 = 20-hydroxy-(4Z,7Z,10Z,13Z,16Z)-docosapentaenoate + oxidized [NADPH--hemoprotein reductase] + H2O + H(+). The catalysed reaction is prostaglandin H1 + reduced [NADPH--hemoprotein reductase] + O2 = 19-hydroxyprostaglandin H1 + oxidized [NADPH--hemoprotein reductase] + H2O + H(+). It carries out the reaction prostaglandin H2 + reduced [NADPH--hemoprotein reductase] + O2 = 19-hydroxyprostaglandin H2 + oxidized [NADPH--hemoprotein reductase] + H2O + H(+). The enzyme catalyses prostaglandin I2 + reduced [NADPH--hemoprotein reductase] + O2 = 19-hydroxy-prostaglandin I2 + oxidized [NADPH--hemoprotein reductase] + H2O + H(+). It catalyses the reaction (4Z,7Z,10Z,13Z,16Z,19Z)-docosahexaenoate + reduced [NADPH--hemoprotein reductase] + O2 = 10,11-epoxy-(4Z,7Z,13Z,16Z,19Z)-docosapentaenoate + oxidized [NADPH--hemoprotein reductase] + H2O + H(+). The catalysed reaction is (4Z,7Z,10Z,13Z,16Z,19Z)-docosahexaenoate + reduced [NADPH--hemoprotein reductase] + O2 = 13,14-epoxy-(4Z,7Z,10Z,16Z,19Z)-docosapentaenoate + oxidized [NADPH--hemoprotein reductase] + H2O + H(+). It carries out the reaction (4Z,7Z,10Z,13Z,16Z,19Z)-docosahexaenoate + reduced [NADPH--hemoprotein reductase] + O2 = 16,17-epoxy-(4Z,7Z,10Z,13Z,19Z)-docosapentaenoate + oxidized [NADPH--hemoprotein reductase] + H2O + H(+). The enzyme catalyses (4Z,7Z,10Z,13Z,16Z,19Z)-docosahexaenoate + reduced [NADPH--hemoprotein reductase] + O2 = 19,20-epoxy-(4Z,7Z,10Z,13Z,16Z)-docosapentaenoate + oxidized [NADPH--hemoprotein reductase] + H2O + H(+). It catalyses the reaction (7Z,10Z,13Z,16Z,19Z)-docosapentaenoate + reduced [NADPH--hemoprotein reductase] + O2 = 10,11-epoxy-(7Z,13Z,16Z,19Z)-docosatetraenoate + oxidized [NADPH--hemoprotein reductase] + H2O + H(+). The catalysed reaction is (7Z,10Z,13Z,16Z,19Z)-docosapentaenoate + reduced [NADPH--hemoprotein reductase] + O2 = 13,14-epoxy-(7Z,10Z,16Z,19Z)-docosatetraenoate + oxidized [NADPH--hemoprotein reductase] + H2O + H(+). It carries out the reaction (7Z,10Z,13Z,16Z,19Z)-docosapentaenoate + reduced [NADPH--hemoprotein reductase] + O2 = 16,17-epoxy-(7Z,10Z,13Z,19Z)-docosatetraenoate + oxidized [NADPH--hemoprotein reductase] + H2O + H(+). The enzyme catalyses (7Z,10Z,13Z,16Z,19Z)-docosapentaenoate + reduced [NADPH--hemoprotein reductase] + O2 = 19,20-epoxy-(7Z,10Z,13Z,16Z)-docosatetraenoate + oxidized [NADPH--hemoprotein reductase] + H2O + H(+). The protein operates within lipid metabolism; fatty acid metabolism. Its function is as follows. A cytochrome P450 monooxygenase involved in the metabolism of endogenous polyunsaturated fatty acids (PUFAs) and their oxygenated derivatives (oxylipins). Mechanistically, uses molecular oxygen inserting one oxygen atom into a substrate, and reducing the second into a water molecule, with two electrons provided by NADPH via cytochrome P450 reductase (CPR; NADPH-ferrihemoprotein reductase). Catalyzes the hydroxylation of carbon hydrogen bonds, with preference for omega-1 and omega-2 positions. Hydroxylates (5Z,8Z,11Z,14Z)-eicosatetraenoic acid (arachidonate) predominantly at omega-2 position to form (18R)-hydroxyeicosatetraenoic acid (18R-HETE). Exhibits omega-1 hydroxylase activity toward prostaglandin (PG) H1, PGH2 and PGI2. Catalyzes the epoxidation of double bonds of PUFAs, including docosahexaenoic and docosapentaenoic acids. Shows little activity against PGD2, PGE1, PGE2, PGF2alpha, and leukotriene B4. This is Cytochrome P450 4F8 from Homo sapiens (Human).